We begin with the raw amino-acid sequence, 1023 residues long: Exportin-T (1023 aa).

Belongs to the exportin family.

It localises to the nucleus. The protein resides in the cytoplasm. TRNA nucleus export receptor which facilitates tRNA translocation across the nuclear pore complex. Involved in pre-tRNA splicing, probably by affecting the interaction of pre-tRNA with splicing endonuclease. The polypeptide is Exportin-T (los1) (Botryotinia fuckeliana (strain B05.10) (Noble rot fungus)).